The chain runs to 156 residues: Probable chemoreceptor glutamine deamidase CheD (156 aa).

It belongs to the CheD family.

It carries out the reaction L-glutaminyl-[protein] + H2O = L-glutamyl-[protein] + NH4(+). Its function is as follows. Probably deamidates glutamine residues to glutamate on methyl-accepting chemotaxis receptors (MCPs), playing an important role in chemotaxis. In Bdellovibrio bacteriovorus (strain ATCC 15356 / DSM 50701 / NCIMB 9529 / HD100), this protein is Probable chemoreceptor glutamine deamidase CheD.